The following is a 334-amino-acid chain: Ferredoxin--NADP reductase (334 aa).

FAD-binding residues include D33, Q41, Y46, A86, F120, D286, and T327.

The protein belongs to the ferredoxin--NADP reductase type 2 family. In terms of assembly, homodimer. The cofactor is FAD.

It carries out the reaction 2 reduced [2Fe-2S]-[ferredoxin] + NADP(+) + H(+) = 2 oxidized [2Fe-2S]-[ferredoxin] + NADPH. The polypeptide is Ferredoxin--NADP reductase (Rickettsia akari (strain Hartford)).